The following is a 95-amino-acid chain: YcgL domain-containing protein Sden_1630 (95 aa).

The YcgL domain occupies 1–85; the sequence is MICTVYKSRR…PKANLLEEHK (85 aa).

This chain is YcgL domain-containing protein Sden_1630, found in Shewanella denitrificans (strain OS217 / ATCC BAA-1090 / DSM 15013).